Reading from the N-terminus, the 99-residue chain is Small ribosomal subunit protein uS14c (99 aa).

Belongs to the universal ribosomal protein uS14 family. In terms of assembly, part of the 30S ribosomal subunit.

The protein localises to the plastid. It localises to the chloroplast. Its function is as follows. Binds 16S rRNA, required for the assembly of 30S particles. The protein is Small ribosomal subunit protein uS14c of Welwitschia mirabilis (Tree tumbo).